A 232-amino-acid polypeptide reads, in one-letter code: Triosephosphate isomerase (232 aa).

6 to 8 is a substrate binding site; sequence NLK. The Electrophile role is filled by H91. E158 acts as the Proton acceptor in catalysis. Residues G164 and S194 each coordinate substrate.

It belongs to the triosephosphate isomerase family. As to quaternary structure, homodimer.

The protein resides in the cytoplasm. The enzyme catalyses D-glyceraldehyde 3-phosphate = dihydroxyacetone phosphate. Its pathway is carbohydrate biosynthesis; gluconeogenesis. It functions in the pathway carbohydrate degradation; glycolysis; D-glyceraldehyde 3-phosphate from glycerone phosphate: step 1/1. Its function is as follows. Involved in the gluconeogenesis. Catalyzes stereospecifically the conversion of dihydroxyacetone phosphate (DHAP) to D-glyceraldehyde-3-phosphate (G3P). This Campylobacter hominis (strain ATCC BAA-381 / DSM 21671 / CCUG 45161 / LMG 19568 / NCTC 13146 / CH001A) protein is Triosephosphate isomerase.